The primary structure comprises 496 residues: UDP-N-acetylmuramoyl-L-alanyl-D-glutamate--2,6-diaminopimelate ligase (496 aa).

Residues Leu29 and Ser31 each coordinate UDP-N-acetyl-alpha-D-muramoyl-L-alanyl-D-glutamate. 118–124 (GTNGKTT) lines the ATP pocket. Residues Asn159, 160 to 161 (TT), Ser187, Gln193, and Arg195 contribute to the UDP-N-acetyl-alpha-D-muramoyl-L-alanyl-D-glutamate site. Residue Lys227 is modified to N6-carboxylysine. Meso-2,6-diaminopimelate is bound by residues Arg392, 416 to 419 (DNPR), Gly467, and Glu471. A Meso-diaminopimelate recognition motif motif is present at residues 416–419 (DNPR).

It belongs to the MurCDEF family. MurE subfamily. Requires Mg(2+) as cofactor. Carboxylation is probably crucial for Mg(2+) binding and, consequently, for the gamma-phosphate positioning of ATP.

Its subcellular location is the cytoplasm. It catalyses the reaction UDP-N-acetyl-alpha-D-muramoyl-L-alanyl-D-glutamate + meso-2,6-diaminopimelate + ATP = UDP-N-acetyl-alpha-D-muramoyl-L-alanyl-gamma-D-glutamyl-meso-2,6-diaminopimelate + ADP + phosphate + H(+). Its pathway is cell wall biogenesis; peptidoglycan biosynthesis. Its function is as follows. Catalyzes the addition of meso-diaminopimelic acid to the nucleotide precursor UDP-N-acetylmuramoyl-L-alanyl-D-glutamate (UMAG) in the biosynthesis of bacterial cell-wall peptidoglycan. In Wigglesworthia glossinidia brevipalpis, this protein is UDP-N-acetylmuramoyl-L-alanyl-D-glutamate--2,6-diaminopimelate ligase.